We begin with the raw amino-acid sequence, 157 residues long: Vitamin K-dependent protein C (157 aa).

Positions 1–157 constitute a Peptidase S1 domain; that stretch reads ENGEVDLDIQ…GCGRLHNYGV (157 aa). N-linked (GlcNAc...) asparagine glycosylation occurs at Asn17. The Charge relay system role is filled by Asp26. N-linked (GlcNAc...) asparagine glycosylation is present at Asn78. 2 cysteine pairs are disulfide-bonded: Cys96/Cys110 and Cys121/Cys149. The active-site Charge relay system is the Ser125.

It belongs to the peptidase S1 family. Plasma; synthesized in the liver.

Its subcellular location is the secreted. The protein localises to the golgi apparatus. It localises to the endoplasmic reticulum. The enzyme catalyses Degradation of blood coagulation factors Va and VIIIa.. Protein C is a vitamin K-dependent serine protease that regulates blood coagulation by inactivating factors Va and VIIIa in the presence of calcium ions and phospholipids. Exerts a protective effect on the endothelial cell barrier function. In Equus caballus (Horse), this protein is Vitamin K-dependent protein C (PROC).